The primary structure comprises 117 residues: Large ribosomal subunit protein bL20 (117 aa).

The protein belongs to the bacterial ribosomal protein bL20 family.

In terms of biological role, binds directly to 23S ribosomal RNA and is necessary for the in vitro assembly process of the 50S ribosomal subunit. It is not involved in the protein synthesizing functions of that subunit. This chain is Large ribosomal subunit protein bL20, found in Roseiflexus sp. (strain RS-1).